The primary structure comprises 300 residues: UPF0761 membrane protein Patl_3954 (300 aa).

The next 6 membrane-spanning stretches (helical) occupy residues 46-66 (LLSL…FPAF), 103-123 (MGAI…SNID), 138-158 (IIFT…LIGL), 184-204 (MLKI…YMIV), 214-234 (ALVG…GFSF), and 248-268 (AMAV…VVLL).

It belongs to the UPF0761 family.

It localises to the cell inner membrane. This chain is UPF0761 membrane protein Patl_3954, found in Pseudoalteromonas atlantica (strain T6c / ATCC BAA-1087).